The sequence spans 123 residues: MARIAGVDLPKDKRAEIALTYIYGIGKPTAQKILAQTGVNPDTRIKDLTEEEVNKLRDYIDKNTKVEGDLRREVALNIKRLIEIGCYRGIRHRRGLPVRGQRTKTNARTRKGPKKTVGARRKK.

The tract at residues 96 to 123 (LPVRGQRTKTNARTRKGPKKTVGARRKK) is disordered.

The protein belongs to the universal ribosomal protein uS13 family. In terms of assembly, part of the 30S ribosomal subunit. Forms a loose heterodimer with protein S19. Forms two bridges to the 50S subunit in the 70S ribosome.

Located at the top of the head of the 30S subunit, it contacts several helices of the 16S rRNA. In the 70S ribosome it contacts the 23S rRNA (bridge B1a) and protein L5 of the 50S subunit (bridge B1b), connecting the 2 subunits; these bridges are implicated in subunit movement. Contacts the tRNAs in the A and P-sites. This chain is Small ribosomal subunit protein uS13, found in Desulforamulus reducens (strain ATCC BAA-1160 / DSM 100696 / MI-1) (Desulfotomaculum reducens).